Reading from the N-terminus, the 217-residue chain is MANIIYINDLRSNRDSDFTKTPIGYVANDSTSRPILGLGDKLELDVPPLTSGDFGNIRASIEGTNEFSDIESSENKTVYHNYSDVDKGQIQYYVDTNFVNPFQPFFKDNNHIVMKQIMPDRTIEYTRQAIVPIQKDTSLDPVYDQQLLKLENPSLYSGYPMGKGYLQFSAGEARMGPNKLYNPNQWFVDTQNQREDVQALQMRTIIRQNYAPAQLFS.

Belongs to the IIV-6 309L family.

This is an uncharacterized protein from Acheta domesticus (House cricket).